The chain runs to 681 residues: Proton channel OTOP3 (681 aa).

A compositionally biased stretch (basic and acidic residues) spans 1-25 (MLSKEEPACRQFHSREKTWGNEHNG). Residues 1-26 (MLSKEEPACRQFHSREKTWGNEHNGK) are disordered. Residues 1–112 (MLSKEEPACR…LHQRAKKTGR (112 aa)) lie on the Cytoplasmic side of the membrane. Residues 113-133 (LFSGLFGLNLMFLGGTVVSSV) form a helical membrane-spanning segment. Over 134 to 143 (ALSNKAVPER) the chain is Extracellular. A helical transmembrane segment spans residues 144-166 (DSQSFLCILMLLSSVWALYHLLF). The Cytoplasmic portion of the chain corresponds to 167–182 (IRNQNGAVHHDHHAGA). The helical transmembrane segment at 183 to 204 (MWLKASLAIFGVCSIILSIFEI) threads the bilayer. The Extracellular portion of the chain corresponds to 205 to 216 (GHALLLQNCEIL). The chain crosses the membrane as a helical span at residues 217-240 (MDIVFFSIEIVFVSVQTVLLWVSC). The Cytoplasmic portion of the chain corresponds to 241-248 (KDCVQMHH). Residues 249–271 (SVTRYGIMLTLATDILLWLTAVI) traverse the membrane as a helical segment. The Extracellular segment spans residues 272-317 (DDSLEQDLEILQSNSTQDESNEMAQCQCPTDSMCWGLKQGYVTMFP). A helical transmembrane segment spans residues 318–334 (FNIEYSLICATLLFIMW). Residues 335–358 (KNVGRREKLHSDPPRHTFQLRGII) lie on the Cytoplasmic side of the membrane. The helical transmembrane segment at 359 to 378 (YGPLIGGAALLVGISVFVQY) threads the bilayer. Topologically, residues 379 to 392 (QVEATSGMVSILSY) are extracellular. A helical transmembrane segment spans residues 393 to 415 (HMYYGYKMIILAPMIVCSVAGII). Residues 416–507 (AHSLREKEKK…QGKMKNYTRK (92 aa)) are Cytoplasmic-facing. Residues 508–529 (LDVTLLFVSAVGQLGISYFSII) traverse the membrane as a helical segment. Residues 530 to 540 (ATVVTTPWTML) lie on the Extracellular side of the membrane. Residues 541–563 (SALNFSNSLLLILQYLSQTMFII) form a helical membrane-spanning segment. Residues 564-614 (ESMRSIHEEEKEKPGHHEESHRRMSVQEMHKAPPSCLDAGHLGLSRRVVKE) are Cytoplasmic-facing. Residues 615–632 (MAMFLMICNIMCWILGAF) traverse the membrane as a helical segment. The Extracellular portion of the chain corresponds to 633 to 651 (GAHPLYMNGLERQLYGSGI). Residues 652–674 (WLAILNIGLPLSVFYRMHSVGIL) traverse the membrane as a helical segment. Residues 675–681 (LEVYLHA) lie on the Cytoplasmic side of the membrane.

It belongs to the otopetrin family. Homodimer.

It localises to the cell membrane. The catalysed reaction is H(+)(in) = H(+)(out). Its activity is regulated as follows. pH regulates the proton channel activity from both sides of the plasma membrane. Low pH activates the channel from the extracellular side but inactivates the channel on the intracellular side. Zn(2+) and Ca(2+) can partially block the channel. In terms of biological role, proton-selective channel gated by extracellular protons. The polypeptide is Proton channel OTOP3 (otop3) (Xenopus tropicalis (Western clawed frog)).